A 217-amino-acid polypeptide reads, in one-letter code: N-(5'-phosphoribosyl)anthranilate isomerase (217 aa).

The protein belongs to the TrpF family.

It catalyses the reaction N-(5-phospho-beta-D-ribosyl)anthranilate = 1-(2-carboxyphenylamino)-1-deoxy-D-ribulose 5-phosphate. Its pathway is amino-acid biosynthesis; L-tryptophan biosynthesis; L-tryptophan from chorismate: step 3/5. The chain is N-(5'-phosphoribosyl)anthranilate isomerase from Bacillus velezensis (strain DSM 23117 / BGSC 10A6 / LMG 26770 / FZB42) (Bacillus amyloliquefaciens subsp. plantarum).